The sequence spans 83 residues: MCCNYYRNCCGGCGYGSGWSSGCGYGCGYGCGYGSGCRYGSGYGTGCGYGCGYGSGCGYGCGYSSSCCGYRPLCYRRCYSSCY.

Interacts with hair keratins.

In terms of biological role, in the hair cortex, hair keratin intermediate filaments are embedded in an interfilamentous matrix, consisting of hair keratin-associated proteins (KRTAP), which are essential for the formation of a rigid and resistant hair shaft through their extensive disulfide bond cross-linking with abundant cysteine residues of hair keratins. The matrix proteins include the high-sulfur and high-glycine-tyrosine keratins. The sequence is that of Keratin-associated protein 21-2 (KRTAP21-2) from Homo sapiens (Human).